Consider the following 1025-residue polypeptide: Probable outer membrane protein PmpF (1025 aa).

The signal sequence occupies residues 1-20 (MTRRILPLSLVFIPLSCISA). Positions 654–681 (NSTETQTANNSIQEQKNTSETFDSNSTT) are disordered. Polar residues predominate over residues 659–681 (QTANNSIQEQKNTSETFDSNSTT). Residues 748–1025 (LLPDDSWFAL…YMNAGGALVF (278 aa)) form the Autotransporter domain.

It belongs to the PMP outer membrane protein family.

It is found in the secreted. Its subcellular location is the cell wall. The protein localises to the cell outer membrane. In Chlamydia muridarum (strain MoPn / Nigg), this protein is Probable outer membrane protein PmpF (pmpF).